The sequence spans 147 residues: MRCLFCRSDDTKVIDSRTSEDGISIRRRRECQLCKRRFSTLETASLTVIKRNGTSEPFRREKVVTGVHKACQGRPVTKADLAVLAQRVEESLRASGNSQVDSNDIGLAILPELLRLDQVAYIRFASVYQDFDSLEDFSRAVERLKNQ.

Residues 3 to 34 (CLFCRSDDTKVIDSRTSEDGISIRRRRECQLC) fold into a zinc finger. Residues 46–136 (LTVIKRNGTS…VYQDFDSLED (91 aa)) form the ATP-cone domain.

It belongs to the NrdR family. The cofactor is Zn(2+).

Negatively regulates transcription of bacterial ribonucleotide reductase nrd genes and operons by binding to NrdR-boxes. The protein is Transcriptional repressor NrdR of Tropheryma whipplei (strain TW08/27) (Whipple's bacillus).